Here is a 250-residue protein sequence, read N- to C-terminus: Small ribosomal subunit protein uS3 (250 aa).

Positions 39 to 107 constitute a KH type-2 domain; the sequence is VREFLTKNLK…PAQVSINEID (69 aa). The disordered stretch occupies residues 215-250; it reads MNPAPAEERPAKRGRGRGEGQERRGRRGDRAADKGE. Over residues 220 to 250 the composition is skewed to basic and acidic residues; it reads AEERPAKRGRGRGEGQERRGRRGDRAADKGE.

This sequence belongs to the universal ribosomal protein uS3 family. In terms of assembly, part of the 30S ribosomal subunit. Forms a tight complex with proteins S10 and S14.

Its function is as follows. Binds the lower part of the 30S subunit head. Binds mRNA in the 70S ribosome, positioning it for translation. This Acinetobacter baumannii (strain AB0057) protein is Small ribosomal subunit protein uS3.